Reading from the N-terminus, the 325-residue chain is Oligopeptide transport system permease protein OppB (325 aa).

6 consecutive transmembrane segments (helical) span residues 12-32 (YLVLLALASFLTYCLTSLAFS), 102-122 (LVVGSVFGTVAGVVIGAWGAI), 135-155 (LALLVLSTPTFVVANLLILGA), 189-208 (LQHLILPSLTLALAAAAGFS), 248-268 (IPMATLFAYGVAGLVTGAVFV), and 290-310 (TNIVAAITVFSGAVVLLAGLL). Positions 95–311 (IGVSLRLLVV…AVVLLAGLLS (217 aa)) constitute an ABC transmembrane type-1 domain.

Belongs to the binding-protein-dependent transport system permease family. OppBC subfamily. In terms of assembly, the complex is composed of an ATP-binding protein (OppD), two transmembrane proteins (OppB and OppC) and a solute-binding protein (OppA).

It localises to the cell inner membrane. In terms of biological role, part of the ABC transporter complex OppABCD involved in the uptake of oligopeptides. Responsible for the translocation of the substrate across the membrane. The chain is Oligopeptide transport system permease protein OppB from Mycobacterium bovis (strain ATCC BAA-935 / AF2122/97).